The sequence spans 82 residues: Small ribosomal subunit protein bS16 (82 aa).

Belongs to the bacterial ribosomal protein bS16 family.

The protein is Small ribosomal subunit protein bS16 of Acidobacterium capsulatum (strain ATCC 51196 / DSM 11244 / BCRC 80197 / JCM 7670 / NBRC 15755 / NCIMB 13165 / 161).